We begin with the raw amino-acid sequence, 563 residues long: AP-1-like transcription factor yap1 (563 aa).

The tract at residues 23-179 (LAALSSNQPP…AFRERKEKHL (157 aa)) is disordered. The Bipartite nuclear localization signal motif lies at 35 to 42 (QQNDKQRS). The span at 36 to 48 (QNDKQRSQAKTDP) shows a compositional bias: basic and acidic residues. A compositionally biased stretch (low complexity) spans 52 to 67 (PGNMSSGSFSMSPGFN). The short motif at 68-75 (KTHPGSGG) is the Bipartite nuclear localization signal element. Residues 79 to 94 (GDDESPFLDFNPELDF) are compositionally biased toward acidic residues. Basic and acidic residues-rich tracts occupy residues 112-144 (SEEHEVGEKRKDMSDNENEESGKKRRESDDKAA) and 170-179 (AFRERKEKHL). One can recognise a bZIP domain in the interval 154–217 (SEPTSKRKAQ…ERLQVELREY (64 aa)). The tract at residues 159–180 (KRKAQNRAAQRAFRERKEKHLK) is basic motif. A leucine-zipper region spans residues 182–189 (LETKVDEL). The transcription activation 1 stretch occupies residues 211–332 (QVELREYRKR…PSPKVPSVYN (122 aa)). Disordered stretches follow at residues 267–380 (IFNG…KLND) and 394–420 (DAVRGKSESVSNTPSQPNNNYEQTPGP). Positions 284 to 296 (SSPATSDSQVPGV) are n-CRD. Over residues 300 to 309 (ETLNGSNNRG) the composition is skewed to polar residues. Over residues 336 to 362 (SASSHDSSNSCSPSSSSDSHQSQMLSS) the composition is skewed to low complexity. 2 stretches are compositionally biased toward polar residues: residues 363-380 (NGTSPEPSSNSPATKLND) and 401-416 (ESVSNTPSQPNNNYEQ). The tract at residues 377 to 459 (KLNDSVQNHH…SQDFGTFFDD (83 aa)) is transcription activation 2. Intrachain disulfides connect cysteine 510–cysteine 534, cysteine 510–cysteine 543, and cysteine 534–cysteine 543. The interval 510–543 (CTKIWDRLQSMEKFRNGEIDVDNLCSELRTKARC) is c-CRD. The short motif at 528 to 535 (IDVDNLCS) is the Nuclear export signal element.

It belongs to the bZIP family. YAP subfamily. Depending on the oxidative stress inducing agent, yap1 can undergo two distinct conformational changes, both involving disulfide bond formation, and both masking the nuclear export signal, thus abolishing nuclear export.

Its subcellular location is the nucleus. The protein resides in the cytoplasm. Functionally, transcription activator involved in oxidative stress response and redox homeostasis. Regulates the transcription of genes encoding antioxidant enzymes and components of the cellular thiol-reducing pathways. This Aspergillus oryzae (strain ATCC 42149 / RIB 40) (Yellow koji mold) protein is AP-1-like transcription factor yap1.